Consider the following 285-residue polypeptide: MLYLIGLGLGDAKDITVKGLEVVRRCSRVYLEAYTSVLTVGKEALEEFYGRKLVVADREEVEQEADNILKDADISDVAFLVVGDPFGATTHSDLVLRATKLGIPYRVIHNASIMNAVGCCGLQLYKFGETVSIVFWTDTWRPESFFDKVKKNRQNGMHTLCLLDIKVKEQSLENLIKGRKIYEPPRYMSVNQAAQQLLEIVQNQRIRGEEPAVTEETLCVGLARVGADDQKIAAGTLRQMCTVDLGEPLHSLIITGGSIHPMEMEMLSLFSIPENSSESQSINGL.

S-adenosyl-L-methionine-binding positions include Leu9, Asp84, Gly87, 112 to 113 (SI), and Leu163. The residue at position 171 (Ser171) is a Phosphoserine. Val225 and His250 together coordinate S-adenosyl-L-methionine.

Belongs to the diphthine synthase family.

The enzyme catalyses 2-[(3S)-amino-3-carboxypropyl]-L-histidyl-[translation elongation factor 2] + 4 S-adenosyl-L-methionine = diphthine methyl ester-[translation elongation factor 2] + 4 S-adenosyl-L-homocysteine + 3 H(+). It participates in protein modification; peptidyl-diphthamide biosynthesis. Its function is as follows. S-adenosyl-L-methionine-dependent methyltransferase that catalyzes four methylations of the modified target histidine residue in translation elongation factor 2 (EF-2), to form an intermediate called diphthine methyl ester. The four successive methylation reactions represent the second step of diphthamide biosynthesis. This Homo sapiens (Human) protein is Diphthine methyl ester synthase (DPH5).